We begin with the raw amino-acid sequence, 59 residues long: Putative HTH-type transcriptional regulator YneL (59 aa).

Residues 1-59 (MSPLRYQKWLRLNEVRRQMLNEHYDVTTAAYAVGYESYPISVGNIRGCLESHPREILPG) form the HTH araC/xylS-type domain. The H-T-H motif DNA-binding region spans 26–49 (VTTAAYAVGYESYPISVGNIRGCL).

This is Putative HTH-type transcriptional regulator YneL (yneL) from Escherichia coli (strain K12).